Reading from the N-terminus, the 290-residue chain is Small ribosomal subunit biogenesis GTPase RsgA (290 aa).

The 152-residue stretch at 62–213 (KNSLVRPPIV…IADTPGFSSL (152 aa)) folds into the CP-type G domain. GTP-binding positions include 111–114 (SKLD) and 156–164 (GQTGVGKST). Residues Cys237, Cys242, His244, and Cys250 each contribute to the Zn(2+) site.

The protein belongs to the TRAFAC class YlqF/YawG GTPase family. RsgA subfamily. As to quaternary structure, monomer. Associates with 30S ribosomal subunit, binds 16S rRNA. It depends on Zn(2+) as a cofactor.

Its subcellular location is the cytoplasm. Functionally, one of several proteins that assist in the late maturation steps of the functional core of the 30S ribosomal subunit. Helps release RbfA from mature subunits. May play a role in the assembly of ribosomal proteins into the subunit. Circularly permuted GTPase that catalyzes slow GTP hydrolysis, GTPase activity is stimulated by the 30S ribosomal subunit. In Streptococcus agalactiae serotype V (strain ATCC BAA-611 / 2603 V/R), this protein is Small ribosomal subunit biogenesis GTPase RsgA.